The primary structure comprises 444 residues: Adenylosuccinate synthetase (444 aa).

Residues 12–18 (GDEGKGK) and 40–42 (GHT) contribute to the GTP site. D13 functions as the Proton acceptor in the catalytic mechanism. Positions 13 and 40 each coordinate Mg(2+). Residues 13–16 (DEGK), 38–41 (NAGH), T128, R142, Q223, T238, and R302 contribute to the IMP site. H41 (proton donor) is an active-site residue. 298–304 (TTTGRRR) contributes to the substrate binding site. Residues R304, 330-332 (KLD), and 412-414 (SLG) contribute to the GTP site.

It belongs to the adenylosuccinate synthetase family. Homodimer. Requires Mg(2+) as cofactor.

The protein localises to the cytoplasm. The catalysed reaction is IMP + L-aspartate + GTP = N(6)-(1,2-dicarboxyethyl)-AMP + GDP + phosphate + 2 H(+). The protein operates within purine metabolism; AMP biosynthesis via de novo pathway; AMP from IMP: step 1/2. Functionally, plays an important role in the de novo pathway of purine nucleotide biosynthesis. Catalyzes the first committed step in the biosynthesis of AMP from IMP. The chain is Adenylosuccinate synthetase from Synechococcus sp. (strain ATCC 27144 / PCC 6301 / SAUG 1402/1) (Anacystis nidulans).